We begin with the raw amino-acid sequence, 1528 residues long: Multidrug resistance-associated protein 1 (1528 aa).

Topologically, residues 1–33 (MALRSFCSADGSDPLWDWNVTWHTSNPDFTKCF) are extracellular. A glycan (N-linked (GlcNAc...) asparagine) is linked at N19. A helical membrane pass occupies residues 34-54 (QNTVLTWVPCFYLWSCFPLYF). The Cytoplasmic portion of the chain corresponds to 55–74 (FYLSRHDRGYIQMTHLNKTK). The helical transmembrane segment at 75–95 (TALGFFLWIICWADLFYSFWE) threads the bilayer. At 96-100 (RSQGV) the chain is on the extracellular side. Residues 101-121 (LRAPVLLVSPTLLGITMLLAT) traverse the membrane as a helical segment. Residues 122-133 (FLIQLERRKGVQ) lie on the Cytoplasmic side of the membrane. Residues 134-154 (SSGIMLTFWLVALLCALAILR) form a helical membrane-spanning segment. Topologically, residues 155-172 (SKIISALKKDAHVDVFRD) are extracellular. A helical membrane pass occupies residues 173–193 (STFYLYFTLVLVQLVLSCFSD). Topologically, residues 194–317 (CSPLFSETVH…KDREPSLFKV (124 aa)) are cytoplasmic. The residue at position 277 (Y277) is a Phosphotyrosine. Residue S290 is modified to Phosphoserine. A helical membrane pass occupies residues 318 to 338 (LYKTFGPYFLMSFLYKALHDL). The 284-residue stretch at 326–609 (FLMSFLYKAL…LPMVISSIVQ (284 aa)) folds into the ABC transmembrane type-1 1 domain. The Extracellular portion of the chain corresponds to 339–364 (MMFAGPKILELIINFVNDREAPDWQG). Residues 365-385 (YFYTALLFVSACLQTLALHQY) form a helical membrane-spanning segment. The Cytoplasmic portion of the chain corresponds to 386–441 (FHICFVSGMRIKTAVVGAVYRKALLITNAARKSSTVGEIVNLMSVDAQRFMDLATY). Residues 442–462 (INMIWSAPLQVILALYFLWLS) form a helical membrane-spanning segment. Over 463-465 (LGP) the chain is Extracellular. The helical transmembrane segment at 466–486 (SVLAGVAVMILMVPLNAVMAM) threads the bilayer. At 487 to 548 (KTKTYQVAHM…VLKKSAYLAA (62 aa)) the chain is on the cytoplasmic side. Residue K504 is modified to N6-succinyllysine. The chain crosses the membrane as a helical span at residues 549–569 (VGTFTWVCTPFLVALSTFAVF). Topologically, residues 570–591 (VTVDERNILDAKKAFVSLALFN) are extracellular. Residues 592–612 (ILRFPLNILPMVISSIVQASV) traverse the membrane as a helical segment. The Cytoplasmic segment spans residues 613–963 (SLKRLRIFLS…VQLSVYWNYM (351 aa)). Residues 644–868 (ITVKNATFTW…DGAFAEFLRT (225 aa)) form the ABC transporter 1 domain. ATP is bound at residue 678–685 (GQVGCGKS). Disordered regions lie at residues 876-895 (LASE…PVEN) and 909-929 (RHLS…SSIA). Residues S878, S882, S912, and S927 each carry the phosphoserine modification. Positions 910-929 (HLSNSSSHSGDTSQQHSSIA) are enriched in polar residues. The chain crosses the membrane as a helical span at residues 964 to 984 (KAIGLFITFLSIFLFLCNHVS). The ABC transmembrane type-1 2 domain maps to 971-1253 (TFLSIFLFLC…LVRMSSEMET (283 aa)). Residues 985-1022 (ALASNYWLSLWTDDPPVVNGTQANRNFRLSVYGALGIL) are Extracellular-facing. N-linked (GlcNAc...) asparagine glycosylation occurs at N1003. Residues 1023 to 1043 (QGAAIFGYSMAVSIGGIFASR) form a helical membrane-spanning segment. Over 1044-1086 (RLHLDLLYNVLRSPMSFFERTPSGNLVNRFSKELDTVDSMIPQ) the chain is Cytoplasmic. Residues 1087 to 1107 (VIKMFMGSLFSVIGAVIIILL) form a helical membrane-spanning segment. Position 1108 (A1108) is a topological domain, extracellular. The chain crosses the membrane as a helical span at residues 1109–1129 (TPIAAVIIPPLGLVYFFVQRF). Residues 1130–1200 (YVASSRQLKR…VANRWLAVRL (71 aa)) lie on the Cytoplasmic side of the membrane. A helical transmembrane segment spans residues 1201–1221 (ECVGNCIVLFAALFAVISRHS). Over 1222 to 1223 (LS) the chain is Extracellular. A helical transmembrane segment spans residues 1224 to 1244 (AGLVGLSVSYSLQITAYLNWL). Residues 1245–1528 (VRMSSEMETN…YSMAKDAGLV (284 aa)) are Cytoplasmic-facing. Residues 1290–1524 (VEFRDYCLRY…RGIFYSMAKD (235 aa)) enclose the ABC transporter 2 domain. 1324–1331 (GRTGAGKS) provides a ligand contact to ATP.

Belongs to the ABC transporter superfamily. ABCC family. Conjugate transporter (TC 3.A.1.208) subfamily.

The protein resides in the cell membrane. It localises to the basolateral cell membrane. It catalyses the reaction ATP + H2O + xenobioticSide 1 = ADP + phosphate + xenobioticSide 2.. The enzyme catalyses an S-substituted glutathione(in) + ATP + H2O = an S-substituted glutathione(out) + ADP + phosphate + H(+). The catalysed reaction is leukotriene C4(in) + ATP + H2O = leukotriene C4(out) + ADP + phosphate + H(+). It carries out the reaction sphing-4-enine 1-phosphate(in) + ATP + H2O = sphing-4-enine 1-phosphate(out) + ADP + phosphate + H(+). It catalyses the reaction 17beta-estradiol 17-O-(beta-D-glucuronate)(in) + ATP + H2O = 17beta-estradiol 17-O-(beta-D-glucuronate)(out) + ADP + phosphate + H(+). The enzyme catalyses vincristine(in) + ATP + H2O = vincristine(out) + ADP + phosphate + H(+). The catalysed reaction is daunorubicin(in) + ATP + H2O = daunorubicin(out) + ADP + phosphate + H(+). It carries out the reaction 2',3'-cGAMP(in) + ATP + H2O = 2',3'-cGAMP(out) + ADP + phosphate + H(+). It catalyses the reaction S-[(2E,6E,10E)-geranylgeranyl]-L-glutathione(in) + ATP + H2O = S-[(2E,6E,10E)-geranylgeranyl]-L-glutathione(out) + ADP + phosphate + H(+). The enzyme catalyses prostaglandin A2-S-(R)-glutathione(in) + ATP + H2O = prostaglandin A2-S-(R)-glutathione(out) + ADP + phosphate + H(+). The catalysed reaction is prostaglandin A2-S-(S)-glutathione(in) + ATP + H2O = prostaglandin A2-S-(S)-glutathione(out) + ADP + phosphate + H(+). Its activity is regulated as follows. MK 571 inhibits sphingosine 1-phosphate and leukotriene C4 export. In terms of biological role, mediates export of organic anions and drugs from the cytoplasm. Mediates ATP-dependent transport of glutathione and glutathione conjugates, leukotriene C4, estradiol-17-beta-o-glucuronide, methotrexate, antiviral drugs and other xenobiotics. Confers resistance to anticancer drugs by decreasing accumulation of drugs in cells, and by mediating ATP- and GSH-dependent drug export. Hydrolyzes ATP with low efficiency. Catalyzes the export of sphingosine 1-phosphate from mast cells independently of their degranulation. Participates in inflammatory response by allowing export of leukotriene C4 from leukotriene C4-synthesizing cells. Mediates ATP-dependent, GSH-independent cyclic GMP-AMP (cGAMP) export. Thus, by limiting intracellular cGAMP concentrations negatively regulates the cGAS-STING pathway. Exports S-geranylgeranyl-glutathione (GGG) in lymphoid cells and stromal compartments of lymphoid organs. ABCC1 (via extracellular transport) with GGT5 (via GGG catabolism) establish GGG gradients within lymphoid tissues to position P2RY8-positive lymphocytes at germinal centers in lymphoid follicles and restrict their chemotactic transmigration from blood vessels to the bone marrow parenchyma. Mediates basolateral export of GSH-conjugated R- and S-prostaglandin A2 diastereomers in polarized epithelial cells. The chain is Multidrug resistance-associated protein 1 from Mus musculus (Mouse).